A 245-amino-acid chain; its full sequence is Phosphoadenosine 5'-phosphosulfate reductase (245 aa).

The active-site Nucleophile; cysteine thiosulfonate intermediate is the Cys-239.

It belongs to the PAPS reductase family. CysH subfamily.

The protein localises to the cytoplasm. The enzyme catalyses [thioredoxin]-disulfide + sulfite + adenosine 3',5'-bisphosphate + 2 H(+) = [thioredoxin]-dithiol + 3'-phosphoadenylyl sulfate. It participates in sulfur metabolism; hydrogen sulfide biosynthesis; sulfite from sulfate: step 3/3. In terms of biological role, catalyzes the formation of sulfite from phosphoadenosine 5'-phosphosulfate (PAPS) using thioredoxin as an electron donor. The polypeptide is Phosphoadenosine 5'-phosphosulfate reductase (Baumannia cicadellinicola subsp. Homalodisca coagulata).